Consider the following 516-residue polypeptide: Bifunctional purine biosynthesis protein PurH (516 aa).

In terms of domain architecture, MGS-like spans 1 to 149 (MSERQPIRRA…KNHANVAVLT (149 aa)).

It belongs to the PurH family.

It carries out the reaction (6R)-10-formyltetrahydrofolate + 5-amino-1-(5-phospho-beta-D-ribosyl)imidazole-4-carboxamide = 5-formamido-1-(5-phospho-D-ribosyl)imidazole-4-carboxamide + (6S)-5,6,7,8-tetrahydrofolate. The catalysed reaction is IMP + H2O = 5-formamido-1-(5-phospho-D-ribosyl)imidazole-4-carboxamide. It participates in purine metabolism; IMP biosynthesis via de novo pathway; 5-formamido-1-(5-phospho-D-ribosyl)imidazole-4-carboxamide from 5-amino-1-(5-phospho-D-ribosyl)imidazole-4-carboxamide (10-formyl THF route): step 1/1. Its pathway is purine metabolism; IMP biosynthesis via de novo pathway; IMP from 5-formamido-1-(5-phospho-D-ribosyl)imidazole-4-carboxamide: step 1/1. The sequence is that of Bifunctional purine biosynthesis protein PurH from Cutibacterium acnes (strain DSM 16379 / KPA171202) (Propionibacterium acnes).